The following is a 545-amino-acid chain: T-complex protein 1 subunit gamma (545 aa).

Residue Met1 is modified to N-acetylmethionine. The disordered stretch occupies residues 1 to 24; sequence MMGHRPVLVLSQNTKRESGRKVQS. Ser11 is modified (phosphoserine). Lys15 participates in a covalent cross-link: Glycyl lysine isopeptide (Lys-Gly) (interchain with G-Cter in SUMO2). Gly42 is an ADP binding site. Residue Gly42 participates in ATP binding. Asp93 serves as a coordination point for Mg(2+). 6 residues coordinate ADP: Gly94, Thr95, Thr96, Ser97, Thr162, and Lys163. Gly94, Thr95, and Thr96 together coordinate ATP. Ser170 is modified (phosphoserine). At Lys222 the chain carries N6-acetyllysine. Residues Ser243 and Ser244 each carry the phosphoserine modification. At Tyr247 the chain carries Phosphotyrosine. Glycyl lysine isopeptide (Lys-Gly) (interchain with G-Cter in SUMO2) cross-links involve residues Lys248 and Lys249. Position 252 is a phosphoserine (Ser252). Cys366 and Cys372 form a disulfide bridge. Lys381 participates in a covalent cross-link: Glycyl lysine isopeptide (Lys-Gly) (interchain with G-Cter in SUMO2). Gly411 provides a ligand contact to ADP. Gly411 serves as a coordination point for ATP. Thr430 and Thr459 each carry phosphothreonine. ADP contacts are provided by Gly482, Glu483, Glu497, and Lys502. Position 482 (Gly482) interacts with ATP. Glu497 is an ATP binding site. Residues 526–545 form a disordered region; sequence HKKKGDDQNRQTGAPDAGQE.

Belongs to the TCP-1 chaperonin family. In terms of assembly, component of the chaperonin-containing T-complex (TRiC), a hexadecamer composed of two identical back-to-back stacked rings enclosing a protein folding chamber. Each ring is made up of eight different subunits: TCP1/CCT1, CCT2, CCT3, CCT4, CCT5, CCT6A/CCT6, CCT7, CCT8. Interacts with PACRG. Interacts with DNAAF4. Interacts with DLEC1.

Its subcellular location is the cytoplasm. It catalyses the reaction ATP + H2O = ADP + phosphate + H(+). Component of the chaperonin-containing T-complex (TRiC), a molecular chaperone complex that assists the folding of actin, tubulin and other proteins upon ATP hydrolysis. The TRiC complex mediates the folding of WRAP53/TCAB1, thereby regulating telomere maintenance. As part of the TRiC complex may play a role in the assembly of BBSome, a complex involved in ciliogenesis regulating transports vesicles to the cilia. The sequence is that of T-complex protein 1 subunit gamma (Cct3) from Rattus norvegicus (Rat).